The primary structure comprises 382 residues: Apolipoprotein A-IV (382 aa).

The N-terminal stretch at 1–20 (MFLKAVVLSLALVAVTGARA) is a signal peptide. 13 tandem repeats follow at residues 33–54 (DYFSQLGSNAKKAVEHLQKSEL), 60–81 (TLFQDKLGEVNTYTEDLQKKLV), 82–103 (PFATELHERLTKDSEKLKEEIR), 115–136 (PHATEVSQKIGDNVRELQQRLG), 137–158 (PFTGGLRTQVNTQVQQLQRQLK), 159–180 (PYAERMESVLRQNIRNLEASVA), 181–202 (PYADEFKAKIDQNVEELKGSLT), 203–224 (PYAEELKAKIDQNVEELRRSLA), 225–246 (PYAQDVQEKLNHQLEGLAFQMK), 247–268 (KQAEELKAKISANADELRQKLV), 269–286 (PVAENVHGHLKGNTEGLQ), 287–308 (KSLLELRSHLDQQVEEFRLKVE), and 309–330 (PYGETFNKALVQQVEDLRQKLG). The tract at residues 33-330 (DYFSQLGSNA…QVEDLRQKLG (298 aa)) is 13 X 22 AA approximate tandem repeats. The segment at 361 to 382 (EASQGQSQALPAQEKAQAPLEG) is disordered.

It belongs to the apolipoprotein A1/A4/E family. In terms of assembly, homodimer. As to expression, secreted in plasma.

The protein localises to the secreted. Its function is as follows. May have a role in chylomicrons and VLDL secretion and catabolism. Required for efficient activation of lipoprotein lipase by ApoC-II; potent activator of LCAT. Apoa-IV is a major component of HDL and chylomicrons. The chain is Apolipoprotein A-IV (APOA4) from Sus scrofa (Pig).